The sequence spans 142 residues: Large ribosomal subunit protein uL11 (142 aa).

This sequence belongs to the universal ribosomal protein uL11 family. In terms of assembly, part of the ribosomal stalk of the 50S ribosomal subunit. Interacts with L10 and the large rRNA to form the base of the stalk. L10 forms an elongated spine to which L12 dimers bind in a sequential fashion forming a multimeric L10(L12)X complex. Post-translationally, one or more lysine residues are methylated.

Its function is as follows. Forms part of the ribosomal stalk which helps the ribosome interact with GTP-bound translation factors. The protein is Large ribosomal subunit protein uL11 of Mycolicibacterium vanbaalenii (strain DSM 7251 / JCM 13017 / BCRC 16820 / KCTC 9966 / NRRL B-24157 / PYR-1) (Mycobacterium vanbaalenii).